A 220-amino-acid chain; its full sequence is Vesicle-associated protein 2-1 (220 aa).

Methionine 1 bears the N-acetylmethionine mark. Residues 1–196 are Cytoplasmic-facing; that stretch reads MTGVGENQLI…RNSGNGLSLK (196 aa). Threonine 2 is modified (N-acetylthreonine; in Vesicle-associated protein 2-1, N-terminally processed). Positions 9–129 constitute an MSP domain; it reads LISIQPDELK…TECKLKVSYI (121 aa). Positions 133 to 154 are disordered; sequence TTQRSSESGATNGDGQSSETIS. Residues 153–188 are a coiled coil; that stretch reads ISTIQRLKEERDAAVKQTQQLQHELETVRRRRNQRN. A helical; Anchor for type IV membrane protein membrane pass occupies residues 197–217; the sequence is LAAMVGLIGLIIGFILKLTLA.

It belongs to the VAMP-associated protein (VAP) (TC 9.B.17) family.

It is found in the endoplasmic reticulum membrane. In terms of biological role, may play a role in vesicle trafficking. In Arabidopsis thaliana (Mouse-ear cress), this protein is Vesicle-associated protein 2-1 (PVA21).